The following is a 262-amino-acid chain: Carbonic anhydrase 13 (262 aa).

An Alpha-carbonic anhydrase domain is found at 4–261 (LSWGYGEHNG…LKGRRVRASF (258 aa)). His-65 serves as the catalytic Proton donor/acceptor. 3 residues coordinate Zn(2+): His-95, His-97, and His-120. 200–201 (TV) lines the substrate pocket.

This sequence belongs to the alpha-carbonic anhydrase family. It depends on Zn(2+) as a cofactor. As to expression, expressed in spleen, lung, kidney, heart, brain, skeletal muscle and testis.

The enzyme catalyses hydrogencarbonate + H(+) = CO2 + H2O. Its activity is regulated as follows. Inhibited by coumarins, sulfonamide derivatives such as acetazolamide (AZA) and Foscarnet (phosphonoformate trisodium salt). In terms of biological role, reversible hydration of carbon dioxide. This is Carbonic anhydrase 13 (Ca13) from Mus musculus (Mouse).